The primary structure comprises 280 residues: 4-diphosphocytidyl-2-C-methyl-D-erythritol kinase (280 aa).

Lysine 11 is an active-site residue. An ATP-binding site is contributed by proline 95–serine 105. Aspartate 137 is an active-site residue.

Belongs to the GHMP kinase family. IspE subfamily.

The enzyme catalyses 4-CDP-2-C-methyl-D-erythritol + ATP = 4-CDP-2-C-methyl-D-erythritol 2-phosphate + ADP + H(+). It participates in isoprenoid biosynthesis; isopentenyl diphosphate biosynthesis via DXP pathway; isopentenyl diphosphate from 1-deoxy-D-xylulose 5-phosphate: step 3/6. Functionally, catalyzes the phosphorylation of the position 2 hydroxy group of 4-diphosphocytidyl-2C-methyl-D-erythritol. The chain is 4-diphosphocytidyl-2-C-methyl-D-erythritol kinase from Geobacter sp. (strain M21).